The chain runs to 307 residues: Putative S-adenosyl-L-methionine-dependent methyltransferase Mflv_5025 (307 aa).

S-adenosyl-L-methionine contacts are provided by residues aspartate 130 and 159-160 (DL).

Belongs to the UPF0677 family.

Exhibits S-adenosyl-L-methionine-dependent methyltransferase activity. The protein is Putative S-adenosyl-L-methionine-dependent methyltransferase Mflv_5025 of Mycolicibacterium gilvum (strain PYR-GCK) (Mycobacterium gilvum (strain PYR-GCK)).